Reading from the N-terminus, the 332-residue chain is Malate dehydrogenase (332 aa).

Residues 16 to 17 (QI), Asp-43, and Gly-90 each bind NAD(+). Arg-99 contacts oxaloacetate. NAD(+)-binding residues include Gln-113 and Asn-132. Oxaloacetate is bound by residues Asn-132, Arg-163, His-188, and Ser-243. His-188 functions as the Proton acceptor in the catalytic mechanism.

This sequence belongs to the LDH/MDH superfamily. MDH type 2 family. Homodimer.

The protein localises to the cytoplasm. The enzyme catalyses (S)-malate + NAD(+) = oxaloacetate + NADH + H(+). Catalyzes the reduction of the carbonyl group of oxalacetic acid. No activity with pulegone. In Nicotiana tabacum (Common tobacco), this protein is Malate dehydrogenase (MD1).